The sequence spans 1812 residues: Sperm flagellar protein 2 (1812 aa).

One can recognise a Calponin-homology (CH) domain in the interval 1–105 (MSEILCHWLN…LLYQLYIALQ (105 aa)). Coiled coils occupy residues 178–260 (LENF…KDLQ) and 374–403 (EERRLKDFQDALDREAALAKQAKIDYEEQA). Basic and acidic residues predominate over residues 618–630 (EEKASPVRQESGD). The tract at residues 618 to 658 (EEKASPVRQESGDRSQNLHNVLSAEGTPETEDETRLSTKKT) is disordered. Coiled coils occupy residues 724–750 (LNQAKLLEEALTGFNRNLIELEGKKSQ), 803–827 (ENINQRVAAENQDMDEDQNLRDQIQ), and 868–897 (KEMFMAEIMKKENKAKKKSEEKEAEKKEEF). Basic and acidic residues predominate over residues 879–897 (ENKAKKKSEEKEAEKKEEF). Disordered regions lie at residues 879–1002 (ENKA…KPGS), 1272–1322 (EEKE…APVI), and 1793–1812 (EHIQGSDGESSPSRLTEEKK). Over residues 902–913 (ATPPTPPAPPPS) the composition is skewed to pro residues. Basic and acidic residues-rich tracts occupy residues 914–929 (EPEKEKEAHPPHERSK), 943–961 (HGNRESPQEGKGKKSETSP), and 1272–1285 (EEKENQPADTKEKP). Residues 1292-1310 (KKVKKEPPKKKREDKKGKG) are compositionally biased toward basic residues. An interaction with IFT20 region spans residues 1317 to 1669 (ESAPVITVEE…AEKTSSFIDM (353 aa)).

Interacts (via C-terminus) with IFT20. Interacts with DYNC1I2. As to expression, predominantly expressed in ciliated tissues. Mainly expressed in testis, followed by trachea. Also expressed at lower level in lung, kidney and liver.

Its subcellular location is the cell projection. It is found in the cilium. It localises to the flagellum. The protein localises to the cytoplasm. The protein resides in the golgi apparatus. Functionally, required for correct axoneme development in spermatozoa. Important for normal development of the manchette and sperm head morphology. Essential for male fertility. Plays a role in localization of the intraflagellar transport protein IFT20 to the manchette, suggesting function as an adapter for dynein-mediated protein transport during spermatogenesis. Also plays a role in bone growth where it seems to be required for normal osteoblast differentiation. This chain is Sperm flagellar protein 2 (SPEF2), found in Sus scrofa (Pig).